A 402-amino-acid polypeptide reads, in one-letter code: Probable tRNA pseudouridine synthase D (402 aa).

The active-site Nucleophile is the D94. Residues 175–364 (YILNYYGTQR…PGTRRKLITK (190 aa)) form the TRUD domain.

The protein belongs to the pseudouridine synthase TruD family.

The enzyme catalyses uridine(13) in tRNA = pseudouridine(13) in tRNA. Its function is as follows. Could be responsible for synthesis of pseudouridine from uracil-13 in transfer RNAs. The sequence is that of Probable tRNA pseudouridine synthase D from Methanococcus aeolicus (strain ATCC BAA-1280 / DSM 17508 / OCM 812 / Nankai-3).